Consider the following 715-residue polypeptide: Polyribonucleotide nucleotidyltransferase (715 aa).

Residues Asp485 and Asp491 each coordinate Mg(2+). The region spanning Pro552–Ile611 is the KH domain. Residues Asn621–Lys689 enclose the S1 motif domain. The segment at Thr695–Ile715 is disordered.

The protein belongs to the polyribonucleotide nucleotidyltransferase family. As to quaternary structure, component of the RNA degradosome, which is a multiprotein complex involved in RNA processing and mRNA degradation. Mg(2+) is required as a cofactor.

It is found in the cytoplasm. The catalysed reaction is RNA(n+1) + phosphate = RNA(n) + a ribonucleoside 5'-diphosphate. Its function is as follows. Involved in mRNA degradation. Catalyzes the phosphorolysis of single-stranded polyribonucleotides processively in the 3'- to 5'-direction. The sequence is that of Polyribonucleotide nucleotidyltransferase from Actinobacillus pleuropneumoniae serotype 3 (strain JL03).